The primary structure comprises 400 residues: Serine/threonine transporter SstT (400 aa).

9 consecutive transmembrane segments (helical) span residues 14 to 34 (IIIAIILGIGVALLFPTVTPY), 48 to 68 (SVAPILVFVLVLSSIANFQVG), 76 to 96 (VLLLYVVGMLLAAFSAVIASL), 136 to 156 (AISEANFIGILAWAIGLGLAM), 177 to 197 (IIHKVIAFAPVGIFGLVAVTF), 211 to 231 (LLAVLLGTMLFVALVINPILV), 285 to 305 (IPLGATVNMAGAAVTITVLTL), 311 to 331 (LGIHVDLATMIILSVVATISA), and 349 to 371 (CSLFGISSEIAMQVVAVGMIISV).

This sequence belongs to the dicarboxylate/amino acid:cation symporter (DAACS) (TC 2.A.23) family.

The protein localises to the cell inner membrane. The catalysed reaction is L-serine(in) + Na(+)(in) = L-serine(out) + Na(+)(out). It carries out the reaction L-threonine(in) + Na(+)(in) = L-threonine(out) + Na(+)(out). In terms of biological role, involved in the import of serine and threonine into the cell, with the concomitant import of sodium (symport system). This is Serine/threonine transporter SstT from Acinetobacter baumannii (strain ATCC 17978 / DSM 105126 / CIP 53.77 / LMG 1025 / NCDC KC755 / 5377).